The primary structure comprises 670 residues: Receptor for retinol uptake stra6 (670 aa).

Topologically, residues 1 to 38 (MSAETVNNYDYSDWYENAAPTKAPVEVIPPCDPTADEG) are extracellular. The helical transmembrane segment at 39-59 (LFHICIAAISLVVMLVLAILA) threads the bilayer. Residues 60–87 (RRQKLSDNQRGLTGLLSPVNFLDHTQHK) lie on the Cytoplasmic side of the membrane. The chain crosses the membrane as a helical span at residues 88–108 (GLAVAVYGVLFCKLVGMVLSH). The Extracellular segment spans residues 109–121 (HPLPFTKEVANKE). Residues 122-142 (FWMILALLYYPALYYPLLACG) traverse the membrane as a helical segment. Residues 143 to 145 (TLH) lie on the Cytoplasmic side of the membrane. Residues 146 to 166 (NKVGYVLGSLLSWTHFGILVW) form a helical membrane-spanning segment. Topologically, residues 167–182 (QKVDCPKTPQIYKYYA) are extracellular. Residues 183–203 (LFGSLPQIACLAFLSFQYPLL) traverse the membrane as a helical segment. Residues 204–274 (LFKGLQNTET…PEDVFRFPLK (71 aa)) are Cytoplasmic-facing. The helical transmembrane segment at 275–295 (LAISVVVAFIALYQMALLLIS) threads the bilayer. Over 296-346 (GVLPTLHIVRRGVDENIAFLLAGFNIILSNDRQEVVRIVVYYLWCVEICYV) the chain is Extracellular. Residues 347–367 (SAVTLSCLVNLLMLMRSMVLH) traverse the membrane as a helical segment. Topologically, residues 368 to 401 (RSNLKGLYRGDSLNVFNCHRSIRPSRPALVCWMG) are cytoplasmic. A helical membrane pass occupies residues 402–422 (FTSYQAAFLCLGMAIQTLVFF). At 423-452 (ICILFAVFLIIIPILWGTNLMLFHIIGNLW) the chain is on the extracellular side. Residues 453 to 473 (PFWLTLVLAALIQHVASRFLF) form a helical membrane-spanning segment. Residues 474–488 (IRKDGGTRDLNNRGS) lie on the Cytoplasmic side of the membrane. Positions 489 to 526 (LFLLSYILFLVNVMIGVVLGIWRVVITALFNIVHLGRL) form an intramembrane region, helical. Residues 527-670 (DISLLNRNVE…KEAESAAASN (144 aa)) lie on the Cytoplasmic side of the membrane. An interaction with calmodulin region spans residues 600 to 626 (VSNAKRARAHWQLLYTLVNNPSLVGSR). The segment at 640 to 670 (GALSRTSKEGSKKDGSVNEPSKEAESAAASN) is disordered. Basic and acidic residues predominate over residues 645–664 (TSKEGSKKDGSVNEPSKEAE).

As to quaternary structure, homodimer. Interacts (via C-terminus) with calmodulin.

It is found in the cell membrane. Its function is as follows. Retinol transporter. Accepts retinol from the extracellular retinol-binding protein rbp4, mediates retinol transport across the cell membrane, and then transmits retinol to the cytoplasmic retinol-binding protein rbp1. Required for normal vitamin A homeostasis. In Danio rerio (Zebrafish), this protein is Receptor for retinol uptake stra6.